The following is a 93-amino-acid chain: MQLHELMDPDYSDNPFPLYRKLHQQGPLIPAGDKIIISGSHAVVDALLNDRRVGKNYMESVRVRFGDDAAGLPLFQGISRMFLVLNPPDHNRL.

This is an uncharacterized protein from Enterobacter agglomerans (Erwinia herbicola).